The chain runs to 353 residues: Photosystem II D2 protein (353 aa).

An N-acetylthreonine modification is found at Thr-2. A Phosphothreonine modification is found at Thr-2. The chain crosses the membrane as a helical span at residues 41–61 (CAYFALGGWFTGTTFVTSWYT). A chlorophyll a-binding site is contributed by His-118. Residues 125-141 (GFMLRQFELARSVQLRP) form a helical membrane-spanning segment. Gln-130 and Asn-143 together coordinate pheophytin a. A helical transmembrane segment spans residues 153-166 (VFVSVFLIYPLGQS). Residue His-198 coordinates chlorophyll a. A helical transmembrane segment spans residues 208-228 (AALLCAIHGATVENTLFEDGD). A plastoquinone-binding residues include His-215 and Phe-262. His-215 contacts Fe cation. His-269 contacts Fe cation. A helical membrane pass occupies residues 279–295 (GLWMSALGVVGLALNLR).

Belongs to the reaction center PufL/M/PsbA/D family. PSII is composed of 1 copy each of membrane proteins PsbA, PsbB, PsbC, PsbD, PsbE, PsbF, PsbH, PsbI, PsbJ, PsbK, PsbL, PsbM, PsbT, PsbX, PsbY, PsbZ, Psb30/Ycf12, at least 3 peripheral proteins of the oxygen-evolving complex and a large number of cofactors. It forms dimeric complexes. The cofactor is The D1/D2 heterodimer binds P680, chlorophylls that are the primary electron donor of PSII, and subsequent electron acceptors. It shares a non-heme iron and each subunit binds pheophytin, quinone, additional chlorophylls, carotenoids and lipids. There is also a Cl(-1) ion associated with D1 and D2, which is required for oxygen evolution. The PSII complex binds additional chlorophylls, carotenoids and specific lipids..

It localises to the plastid. The protein resides in the chloroplast thylakoid membrane. It catalyses the reaction 2 a plastoquinone + 4 hnu + 2 H2O = 2 a plastoquinol + O2. In terms of biological role, photosystem II (PSII) is a light-driven water:plastoquinone oxidoreductase that uses light energy to abstract electrons from H(2)O, generating O(2) and a proton gradient subsequently used for ATP formation. It consists of a core antenna complex that captures photons, and an electron transfer chain that converts photonic excitation into a charge separation. The D1/D2 (PsbA/PsbD) reaction center heterodimer binds P680, the primary electron donor of PSII as well as several subsequent electron acceptors. D2 is needed for assembly of a stable PSII complex. The chain is Photosystem II D2 protein from Amborella trichopoda.